We begin with the raw amino-acid sequence, 180 residues long: Large ribosomal subunit protein uL16 (180 aa).

Belongs to the universal ribosomal protein uL16 family.

The polypeptide is Large ribosomal subunit protein uL16 (Hyperthermus butylicus (strain DSM 5456 / JCM 9403 / PLM1-5)).